The primary structure comprises 105 residues: Nucleoid-associated protein RPC_4847 (105 aa).

The protein belongs to the YbaB/EbfC family. In terms of assembly, homodimer.

It is found in the cytoplasm. It localises to the nucleoid. Binds to DNA and alters its conformation. May be involved in regulation of gene expression, nucleoid organization and DNA protection. The sequence is that of Nucleoid-associated protein RPC_4847 from Rhodopseudomonas palustris (strain BisB18).